Here is a 203-residue protein sequence, read N- to C-terminus: Glycerol-3-phosphate acyltransferase (203 aa).

A run of 4 helical transmembrane segments spans residues 6-26 (LTLLMIVAAYLAGSVSSAVLV), 82-102 (AISLGLIAIAACLGHIYPIFF), 118-138 (APIGDDLAICLMASWVVLVLI), and 141-161 (YSSLAAIITALLAPLYTWWLD).

This sequence belongs to the PlsY family. Probably interacts with PlsX.

Its subcellular location is the cell inner membrane. The enzyme catalyses an acyl phosphate + sn-glycerol 3-phosphate = a 1-acyl-sn-glycero-3-phosphate + phosphate. It functions in the pathway lipid metabolism; phospholipid metabolism. Functionally, catalyzes the transfer of an acyl group from acyl-phosphate (acyl-PO(4)) to glycerol-3-phosphate (G3P) to form lysophosphatidic acid (LPA). This enzyme utilizes acyl-phosphate as fatty acyl donor, but not acyl-CoA or acyl-ACP. The protein is Glycerol-3-phosphate acyltransferase of Shewanella sp. (strain MR-7).